The primary structure comprises 451 residues: Signal transduction histidine-protein kinase ArlS (451 aa).

2 consecutive transmembrane segments (helical) span residues 11–31 (IIVT…IIIF) and 156–176 (IIAL…SYVF). Positions 178–231 (TQITKPLVSLSNKMIEIRRDGFQNKLQLNTNYEEIDNLANTFNEMMSQIEESFN) constitute an HAMP domain. A Histidine kinase domain is found at 239 to 451 (DASHELRTPL…NKGTTFKIIF (213 aa)). H242 carries the post-translational modification Phosphohistidine; by autocatalysis.

Autophosphorylated.

Its subcellular location is the cell membrane. It carries out the reaction ATP + protein L-histidine = ADP + protein N-phospho-L-histidine.. Member of the two-component regulatory system ArlS/ArlR involved in the regulation of adhesion, autolysis, multidrug resistance and virulence. ArlS probably functions as a sensor protein kinase which is autophosphorylated at a histidine residue and transfers its phosphate group to ArlR. The sequence is that of Signal transduction histidine-protein kinase ArlS (arlS) from Staphylococcus aureus (strain bovine RF122 / ET3-1).